The chain runs to 302 residues: Alpha-N-acetyl-neuraminyl-2,3-beta-galactosyl-1,3-N-acetyl-galactosaminide alpha-2,6-sialyltransferase (302 aa).

At 1 to 6 (MKAPGR) the chain is on the cytoplasmic side. The helical; Signal-anchor for type II membrane protein transmembrane segment at 7–27 (LVLIILCSVVFSAVYILLCCW) threads the bilayer. The Lumenal segment spans residues 28-302 (AGLPLCLATC…VFAHPSWRTE (275 aa)). The cysteines at positions 76 and 225 are disulfide-linked. A glycan (N-linked (GlcNAc...) asparagine) is linked at Asn-135.

The protein belongs to the glycosyltransferase 29 family. In terms of tissue distribution, ubiquitous.

It localises to the golgi apparatus membrane. The enzyme catalyses an alpha-Neu5Ac-(2-&gt;3)-beta-D-Gal-(1-&gt;3)-D-GlcNAc derivative + CMP-N-acetyl-beta-neuraminate = an alpha-Neu5Ac-(2-&gt;3)-beta-D-Gal-(1-&gt;3)-[alpha-Neu5Ac-(2-&gt;6)]-D-GlcNAc derivative + CMP + H(+). It carries out the reaction N-acetyl-alpha-neuraminosyl-(2-&gt;3)-beta-D-galactosyl-(1-&gt;3)-N-acetyl-D-galactosamine + CMP-N-acetyl-beta-neuraminate = N-acetyl-alpha-neuraminosyl-(2-&gt;3)-beta-D-galactosyl-(1-&gt;3)-[N-acetyl-alpha-neuraminosyl-(2-&gt;6)]-N-acetyl-D-galactosamine + CMP + H(+). The catalysed reaction is a ganglioside GM1b (d18:1(4E)) + CMP-N-acetyl-beta-neuraminate = a ganglioside GD1alpha (d18:1(4E)) + CMP + H(+). It catalyses the reaction 3-O-[alpha-Neu5Ac-(2-&gt;3)-beta-D-Gal-(1-&gt;3)-alpha-D-GalNAc]-L-Ser-[protein] + CMP-N-acetyl-beta-neuraminate = a 3-O-{alpha-Neu5Ac-(2-&gt;3)-beta-D-Gal-(1-&gt;3)-[alpha-Neu5Ac-(2-&gt;6)]-alpha-D-GalNAc}-L-seryl-[protein] + CMP + H(+). The enzyme catalyses 3-O-[alpha-Neu5Ac-(2-&gt;3)-beta-D-Gal-(1-&gt;3)-alpha-D-GalNAc]-L-Thr-[protein] + CMP-N-acetyl-beta-neuraminate = a 3-O-{alpha-Neu5Ac-(2-&gt;3)-beta-D-Gal-(1-&gt;3)-[alpha-Neu5Ac-(2-&gt;6)]-alpha-D-GalNAc}-L-threonyl-[protein] + CMP + H(+). It participates in protein modification; protein glycosylation. Its pathway is glycolipid biosynthesis. Transfers the sialyl group (N-acetyl-alpha-neuraminyl or NeuAc) from CMP-NeuAc to the GalNAc residue on the NeuAc-alpha-2,3-Gal-beta-1,3-GalNAc sequence of glycoproteins and glycolipids forming an alpha-2,6-linkage. Produces branched type disialyl structures by transfer of a sialyl group onto a GalNAc residue inside the backbone core chains. Prefers O-glycans to glycoproteins or glycolipids. This is Alpha-N-acetyl-neuraminyl-2,3-beta-galactosyl-1,3-N-acetyl-galactosaminide alpha-2,6-sialyltransferase (ST6GALNAC4) from Homo sapiens (Human).